Consider the following 318-residue polypeptide: Apo-salmochelin esterase (318 aa).

The helical transmembrane segment at 13–32 threads the bilayer; that stretch reads KAIFFHLSCLTLICSAQVYA. Catalysis depends on residues serine 189 and histidine 287.

Belongs to the esterase D family. As to quaternary structure, monomer.

The protein resides in the cell inner membrane. It catalyses the reaction enterobactin + H2O = N-(2,3-dihydroxybenzoyl)-L-serine trimer. It carries out the reaction monoglucosyl-enterobactin + H2O = [N-(2,3-dihydroxybenzoyl)-L-seryl]2-N-(C-5-[deoxy-beta-D-glucosyl]-2,3-dihydroxybenzoyl)-L-serine + H(+). The enzyme catalyses diglucosyl-enterobactin + H2O = N-(2,3-dihydroxybenzoyl)-L-seryl-[N-(C-5-[deoxy-beta-D-glucosyl]-2,3-dihydroxybenzoyl)-L-serine]2 + H(+). The catalysed reaction is triglucosyl-enterobactin + H2O = [N-(C-5-[deoxy-beta-D-glucosyl]-2,3-dihydroxybenzoyl)-L-serine]3 + H(+). In terms of biological role, catalyzes the hydrolysis of both the apo and Fe3(+)-bound forms of enterobactin (Ent), monoglucosyl-C-Ent (MGE), diglucosyl-C-Ent (DGE) and triglucosyl-C-Ent (TGE). It prefers apo siderophores as substrates and hydrolyzes the Fe3(+)-bound siderophores very inefficiently. Tends to hydrolyze the trilactone just once to produce linearized trimers. May hydrolyze and linearize some or all of apo enterobactins while they are being exported. This chain is Apo-salmochelin esterase, found in Escherichia coli O6:H1 (strain CFT073 / ATCC 700928 / UPEC).